Reading from the N-terminus, the 96-residue chain is Plasminogen-like protein B (96 aa).

Positions 1–19 (MEHKEVVLLLLLFLKSGQG) are cleaved as a signal peptide. Residues 20–96 (EPLDDYVNTQ…RMRDAVLFEK (77 aa)) form the PAN domain. 2 disulfides stabilise this stretch: Cys-49/Cys-73 and Cys-53/Cys-61.

It is found in the secreted. Functionally, may bind noncovalently to lysine binding sites present in the kringle structures of plasminogen. This may interfere with the binding of fibrin or alpha-2-antiplasmin to plasminogen and may result in the localization of activity at sites necessary for extracellular matrix destruction. This Homo sapiens (Human) protein is Plasminogen-like protein B (PLGLB1).